A 354-amino-acid polypeptide reads, in one-letter code: Glutaminyl-peptide cyclotransferase (354 aa).

A mitochondrion-targeting transit peptide spans Met-1–Tyr-8. Residues Cys-136 and Cys-158 are joined by a disulfide bond. A Zn(2+)-binding site is contributed by Asp-153. The Proton acceptor role is filled by Glu-190. Glu-191 provides a ligand contact to Zn(2+). Residue Asp-228 is the Proton acceptor of the active site. His-318 serves as a coordination point for Zn(2+).

It belongs to the glutaminyl-peptide cyclotransferase family.

The protein localises to the secreted. Its subcellular location is the mitochondrion. It catalyses the reaction N-terminal L-glutaminyl-[peptide] = N-terminal 5-oxo-L-prolyl-[peptide] + NH4(+). Inhibited by imidazoles (imidazole, benzimidazole, 1-benzylimidazole, 1-methylimidazole, P150/03 and N-omega-acetylhistamine) and cysteamines (cysteamine and N-dimethylcysteamine). Inhibited by PDB50 1(3,4-dimethoxyphenyl)-3-(3-imidazol-1-ylpropyl)thiourea. Functionally, acts as a glutaminyl-peptide cyclotransferase. Responsible for the biosynthesis of pyroglutamyl peptides. Might be more efficient in the conversion of tri and tetrapeptides in vitro. Might have a relative preference for substrates containing hydrophobic amino acids in vitro. The chain is Glutaminyl-peptide cyclotransferase from Drosophila melanogaster (Fruit fly).